Here is a 70-residue protein sequence, read N- to C-terminus: UPF0352 protein Sfri_2492 (70 aa).

The protein belongs to the UPF0352 family.

This chain is UPF0352 protein Sfri_2492, found in Shewanella frigidimarina (strain NCIMB 400).